The chain runs to 224 residues: Glycerol-3-phosphate acyltransferase (224 aa).

A run of 6 helical transmembrane segments spans residues 3-23 (IFLS…IGSL), 54-74 (VFGY…VVFA), 90-112 (LYFY…PIYF), 127-147 (LISI…LLLF), 152-172 (VSLS…IPWM), and 183-203 (GFGQ…LIFW).

The protein belongs to the PlsY family. As to quaternary structure, probably interacts with PlsX.

The protein resides in the cell membrane. The enzyme catalyses an acyl phosphate + sn-glycerol 3-phosphate = a 1-acyl-sn-glycero-3-phosphate + phosphate. It participates in lipid metabolism; phospholipid metabolism. In terms of biological role, catalyzes the transfer of an acyl group from acyl-phosphate (acyl-PO(4)) to glycerol-3-phosphate (G3P) to form lysophosphatidic acid (LPA). This enzyme utilizes acyl-phosphate as fatty acyl donor, but not acyl-CoA or acyl-ACP. The protein is Glycerol-3-phosphate acyltransferase of Mycoplasmopsis synoviae (strain 53) (Mycoplasma synoviae).